The chain runs to 203 residues: Glycerol-3-phosphate acyltransferase (203 aa).

Helical transmembrane passes span 4-24 (LTFA…AVLI), 68-88 (IPVY…FIGI), 104-124 (GGKG…DMGS), and 125-145 (FMIV…LAAI).

This sequence belongs to the PlsY family. Probably interacts with PlsX.

The protein localises to the cell inner membrane. It catalyses the reaction an acyl phosphate + sn-glycerol 3-phosphate = a 1-acyl-sn-glycero-3-phosphate + phosphate. It functions in the pathway lipid metabolism; phospholipid metabolism. Catalyzes the transfer of an acyl group from acyl-phosphate (acyl-PO(4)) to glycerol-3-phosphate (G3P) to form lysophosphatidic acid (LPA). This enzyme utilizes acyl-phosphate as fatty acyl donor, but not acyl-CoA or acyl-ACP. In Tolumonas auensis (strain DSM 9187 / NBRC 110442 / TA 4), this protein is Glycerol-3-phosphate acyltransferase.